The primary structure comprises 349 residues: Cyclic AMP-dependent transcription factor ATF-4 (349 aa).

Disordered regions lie at residues 49 to 75 (FSSD…TGKE), 204 to 271 (PPCV…TAKV), and 279 to 298 (KLKK…QKKR). Pro-60 is modified (4-hydroxyproline). Thr-212 is subject to Phosphothreonine. Phosphoserine occurs at positions 214, 218, 223, 230, and 234. The short motif at 214-223 (SDNDSGICMS) is the BetaTrCP degron motif element. The span at 229–239 (GSPQHSPSTSR) shows a compositional bias: polar residues. 4-hydroxyproline is present on Pro-235. Phosphoserine is present on Ser-247. Phosphoserine; by RPS6KA3 is present on Ser-251. Residues Lys-258 and Lys-270 each participate in a glycyl lysine isopeptide (Lys-Gly) (interchain with G-Cter in SUMO2) cross-link. Residues 276–339 (LDKKLKKMEQ…QYLKDLIEEV (64 aa)) form the bZIP domain. Positions 278–298 (KKLKKMEQNKTAATRYRQKKR) are basic motif. The interaction with GABBR1 stretch occupies residues 303-339 (ALTGECKELEKKNEALKEKADSLAKEIQYLKDLIEEV). The tract at residues 304-332 (LTGECKELEKKNEALKEKADSLAKEIQYL) is leucine-zipper. At Lys-309 the chain carries N6-acetyllysine.

It belongs to the bZIP family. As to quaternary structure, binds DNA as a homodimer and as a heterodimer. Heterodimer; heterodimerizes with CEBPB. Heterodimer; heterodimerizes with DDIT3/CHOP. Interacts with CEP290 (via an N-terminal region). Interacts with NEK6, DAPK2 (isoform 2) and ZIPK/DAPK3. Interacts (via its leucine zipper domain) with GABBR1 and GABBR2 (via their C-termini). Forms a heterodimer with TXLNG in osteoblasts. Interacts (via its DNA binding domain) with FOXO1 (C-terminal half); the interaction occurs in osteoblasts and regulates glucose homeostasis through suppression of beta-cell proliferation and a decrease in insulin production. Interacts with SATB2; the interaction results in enhanced DNA binding and transactivation by these transcription factors. Interacts with ABRAXAS2. Interacts with TRIB3, inhibiting the transactivation activity of ATF4. Interacts with DISC1; which inhibits ATF4 transcription factor activity by disrupting ATF4 dimerization and DNA-binding. Interacts with EP300/p300; EP300/p300 stabilizes ATF4 and increases its transcriptional activity independently of its catalytic activity by preventing its ubiquitination. Ubiquitinated by SCF(BTRC) in response to mTORC1 signal, followed by proteasomal degradation and leading to down-regulate expression of SIRT4. Interaction with EP300/p300 inhibits ubiquitination by SCF(BTRC). In terms of processing, phosphorylation at Ser-251 by RPS6KA3/RSK2 in osteoblasts enhances transactivation activity and promotes osteoblast differentiation. Phosphorylated on the betaTrCP degron motif at Ser-218, followed by phosphorylation at Thr-212, Ser-223, Ser-230, Ser-234 and Ser-247, promoting interaction with BTRC and ubiquitination. Phosphorylation is promoted by mTORC1. Phosphorylation at Ser-214 by CK2 decreases its stability. Phosphorylated by NEK6. Post-translationally, hydroxylated by PHD3, leading to decreased protein stability. In terms of tissue distribution, ubiquitously expressed in adults.

It is found in the nucleus. Its subcellular location is the nucleus speckle. The protein resides in the cytoplasm. It localises to the cell membrane. The protein localises to the cytoskeleton. It is found in the microtubule organizing center. Its subcellular location is the centrosome. Its function is as follows. Transcription factor that binds the cAMP response element (CRE) (consensus: 5'-GTGACGT[AC][AG]-3') and displays two biological functions, as regulator of metabolic and redox processes under normal cellular conditions, and as master transcription factor during integrated stress response (ISR). Binds to asymmetric CRE's as a heterodimer and to palindromic CRE's as a homodimer. Core effector of the ISR, which is required for adaptation to various stress such as endoplasmic reticulum (ER) stress, amino acid starvation, mitochondrial stress or oxidative stress. During ISR, ATF4 translation is induced via an alternative ribosome translation re-initiation mechanism in response to EIF2S1/eIF-2-alpha phosphorylation, and stress-induced ATF4 acts as a master transcription factor of stress-responsive genes in order to promote cell recovery. Promotes the transcription of genes linked to amino acid sufficiency and resistance to oxidative stress to protect cells against metabolic consequences of ER oxidation. Activates the transcription of NLRP1, possibly in concert with other factors in response to ER stress. Activates the transcription of asparagine synthetase (ASNS) in response to amino acid deprivation or ER stress. However, when associated with DDIT3/CHOP, the transcriptional activation of the ASNS gene is inhibited in response to amino acid deprivation. Together with DDIT3/CHOP, mediates programmed cell death by promoting the expression of genes involved in cellular amino acid metabolic processes, mRNA translation and the terminal unfolded protein response (terminal UPR), a cellular response that elicits programmed cell death when ER stress is prolonged and unresolved. Activates the expression of COX7A2L/SCAF1 downstream of the EIF2AK3/PERK-mediated unfolded protein response, thereby promoting formation of respiratory chain supercomplexes and increasing mitochondrial oxidative phosphorylation. Together with DDIT3/CHOP, activates the transcription of the IRS-regulator TRIB3 and promotes ER stress-induced neuronal cell death by regulating the expression of BBC3/PUMA in response to ER stress. May cooperate with the UPR transcriptional regulator QRICH1 to regulate ER protein homeostasis which is critical for cell viability in response to ER stress. In the absence of stress, ATF4 translation is at low levels and it is required for normal metabolic processes such as embryonic lens formation, fetal liver hematopoiesis, bone development and synaptic plasticity. Acts as a regulator of osteoblast differentiation in response to phosphorylation by RPS6KA3/RSK2: phosphorylation in osteoblasts enhances transactivation activity and promotes expression of osteoblast-specific genes and post-transcriptionally regulates the synthesis of Type I collagen, the main constituent of the bone matrix. Cooperates with FOXO1 in osteoblasts to regulate glucose homeostasis through suppression of beta-cell production and decrease in insulin production. Activates transcription of SIRT4. Regulates the circadian expression of the core clock component PER2 and the serotonin transporter SLC6A4. Binds in a circadian time-dependent manner to the cAMP response elements (CRE) in the SLC6A4 and PER2 promoters and periodically activates the transcription of these genes. Mainly acts as a transcriptional activator in cellular stress adaptation, but it can also act as a transcriptional repressor: acts as a regulator of synaptic plasticity by repressing transcription, thereby inhibiting induction and maintenance of long-term memory. Regulates synaptic functions via interaction with DISC1 in neurons, which inhibits ATF4 transcription factor activity by disrupting ATF4 dimerization and DNA-binding. This is Cyclic AMP-dependent transcription factor ATF-4 from Mus musculus (Mouse).